Here is a 293-residue protein sequence, read N- to C-terminus: Histamine N-methyltransferase A (293 aa).

Glu-28 lines the substrate pocket. S-adenosyl-L-methionine-binding residues include Gly-60, Glu-89, Gln-94, Ser-120, and Ile-142. Asn-283 contacts substrate.

Belongs to the class I-like SAM-binding methyltransferase superfamily. HNMT family. In terms of assembly, monomer.

Its subcellular location is the cytoplasm. The enzyme catalyses histamine + S-adenosyl-L-methionine = N(tau)-methylhistamine + S-adenosyl-L-homocysteine + H(+). Its function is as follows. Inactivates histamine by N-methylation. Plays an important role in degrading histamine and in regulating the airway response to histamine. The chain is Histamine N-methyltransferase A (hnmt-a) from Xenopus laevis (African clawed frog).